The chain runs to 473 residues: GTPase Der (473 aa).

2 consecutive EngA-type G domains span residues 3–167 and 203–378; these read FTVA…GKDR and LRVA…RVWN. GTP is bound by residues 9 to 16, 56 to 60, 119 to 122, 209 to 216, 256 to 260, and 321 to 324; these read GRPNVGKS, DTAGL, NKSE, GRPNAGKS, DTAGM, and NKWD. Positions 379–463 constitute a KH-like domain; the sequence is KRISTARLNR…PIRIHFRSPD (85 aa).

Belongs to the TRAFAC class TrmE-Era-EngA-EngB-Septin-like GTPase superfamily. EngA (Der) GTPase family. Associates with the 50S ribosomal subunit.

GTPase that plays an essential role in the late steps of ribosome biogenesis. The sequence is that of GTPase Der from Rhizobium etli (strain ATCC 51251 / DSM 11541 / JCM 21823 / NBRC 15573 / CFN 42).